Here is a 135-residue protein sequence, read N- to C-terminus: Salivary protein 15 (135 aa).

A signal peptide spans Met1–Ala21. A glycan (N-linked (GlcNAc...) asparagine) is linked at Asn22. Residues Pro48–Asp67 are required for Borrelia OspC-binding. Asn92 and Asn104 each carry an N-linked (GlcNAc...) asparagine glycan. Residues Gly116–Cys135 form a CD4-binding region.

The protein belongs to the salp15 family. Monomer. Interacts with host CD4. Interacts with host DC-SIGN (CD209). In terms of assembly, (Microbial infection) Interacts with Borrelia outer surface protein C (OspC). In terms of processing, glycosylated. In terms of tissue distribution, expressed in salivary glands. Detected in host skin, at the site of natural inoculation.

It localises to the secreted. Functionally, salivary tick protein that downregulates host immune system by binding to both dendritic cells, and CD4(+) T cells. Specifically binds to the CD4 coreceptor on T cells. This interaction prevents the activation of the Src kinase, Lck, and its downstream substrate Zap-70, and results in deficient activation of PLCgamma1, the repression of calcium fluxes triggered by T-cell antigen receptor (TCR) ligation, and a subsequent reduction in interleukin-2 production. This salivary protein also binds to DC-SIGN (CD209) on dendritic cells (DC) and activates the Raf-1 kinase/MEK signaling pathway that results in down-regulating expression of pro-inflammatory cytokines. Furthermore, it inhibits T cell proliferation induced by DCs. It also inhibits in vitro keratinocyte inflammation induced by Borrelia burgdorferi or by the major outer surface protein (OspC) of Borrelia. In addition, it downregulates chemokines and monocyte chemoattractant protein 1, as well as several antimicrobial peptides such as defensins, cathelicidin, psoriasin, and RNase 7. Apart from its immunomodulatory activities, it is also associated with protection of Borrelia spirochetes from antibody-mediated killing through its binding to OspC. In vivo, tests on different immune disease animal models show promising therapeutic results, e.g., in inhibiting HIV infection, experimental autoimmune encephalomyelitis, transplantation rejection, and asthma. In terms of biological role, (Microbial infection) Protects Borrelia garinii (strains A87S and VSBP) from host complement-mediated killing. (Microbial infection) Partially protects Borrelia burgdorferi (strains VS215 and B31) from host complement-mediated killing. The protein is Salivary protein 15 of Ixodes scapularis (Black-legged tick).